Here is a 340-residue protein sequence, read N- to C-terminus: CMP-sialic acid transporter 1 (340 aa).

Residues 1 to 5 (MAATP) are Cytoplasmic-facing. Residues 6–26 (WYFVAVLLTILTSSQGILTTL) traverse the membrane as a helical segment. At 27–36 (SQSDGGYKYD) the chain is on the lumenal side. A helical transmembrane segment spans residues 37-57 (YATVPFLAEVFKLIISGLFLW). The Cytoplasmic segment spans residues 58 to 78 (REMRTSSSTTSRITTDWKSVR). A helical membrane pass occupies residues 79–99 (LFVIPSLIYLIHNNVQFATLT). At 100 to 102 (YVD) the chain is on the lumenal side. A helical transmembrane segment spans residues 103–125 (TSTYQIMGNLKIVTTGILFRLFL). Residues 126–168 (KRKLSKLQWMAIGLLAVGTTTSQVKGCGEASCDSLFTAPIQGY) are Cytoplasmic-facing. A helical membrane pass occupies residues 169 to 189 (LLGILSAGLSALAGIYTEFLM). At 190–200 (KRNNDTLYWQN) the chain is on the lumenal side. Residues 201–217 (LQLYTFGSLFNVARLIA) traverse the membrane as a helical segment. Over 218-238 (DDFRHGFEKGPWWQRIFDGYS) the chain is Cytoplasmic. Residues 239–259 (ITTWLVVLNLGSTGLLVSWLM) traverse the membrane as a helical segment. The Lumenal portion of the chain corresponds to 260 to 282 (KYADNIVKVYSTSMAMLLTMVAS). A helical transmembrane segment spans residues 283–303 (IYLFSFKPTLQLFLGIVICIM). Residues 304-340 (SLHMYFAPPHTLVDLPVTNEAHAKTLKQVVVEEKTDS) lie on the Cytoplasmic side of the membrane.

The protein belongs to the nucleotide-sugar transporter family. CMP-Sialate:CMP antiporter (TC 2.A.7.12) subfamily.

The protein localises to the golgi apparatus membrane. Functionally, essential protein. Sugar transporter involved in the transport of CMP-sialic acid from the cytoplasm into the Golgi. The sequence is that of CMP-sialic acid transporter 1 from Arabidopsis thaliana (Mouse-ear cress).